The sequence spans 332 residues: Putative integrase/recombinase y4rC (332 aa).

In terms of domain architecture, Core-binding (CB) spans 5-98 (ASLAPLLESF…AIHSFFRYAA (94 aa)). In terms of domain architecture, Tyr recombinase spans 122–307 (TLVNFLTRPE…TLAMKEAALA (186 aa)). Residues arginine 162, lysine 187, histidine 259, arginine 262, and histidine 285 contribute to the active site. Residue tyrosine 294 is the O-(3'-phospho-DNA)-tyrosine intermediate of the active site.

Belongs to the 'phage' integrase family.

This Sinorhizobium fredii (strain NBRC 101917 / NGR234) protein is Putative integrase/recombinase y4rC.